The chain runs to 55 residues: Spermatid nuclear transition protein 1 (55 aa).

The segment covering 1–42 (MSTSRKLKTHGMRRGKNRAPHKGVKRGGSKRKYRKSVLKSRK) has biased composition (basic residues). The interval 1 to 55 (MSTSRKLKTHGMRRGKNRAPHKGVKRGGSKRKYRKSVLKSRKRGDDASRNYRSHL) is disordered. Phosphoserine occurs at positions 36 and 40.

It belongs to the nuclear transition protein 1 family. Testis-specific.

The protein localises to the nucleus. Its subcellular location is the chromosome. Plays a key role in the replacement of histones to protamine in the elongating spermatids of mammals. In condensing spermatids, loaded onto the nucleosomes, where it promotes the recruitment and processing of protamines, which are responsible for histone eviction. The histone H2AB1-H2BC1/TH2B dimer is required for loading of TNP1 onto chromatin. This is Spermatid nuclear transition protein 1 from Mus musculus (Mouse).